Here is a 243-residue protein sequence, read N- to C-terminus: Venom nerve growth factor 1 (243 aa).

An N-terminal signal peptide occupies residues M1 to A18. Positions V19–R125 are excised as a propeptide. 3 cysteine pairs are disulfide-bonded: C139/C204, C182/C232, and C192/C234. N148 carries an N-linked (GlcNAc...) asparagine glycan.

The protein belongs to the NGF-beta family. Homodimer; non-covalently linked. As to expression, expressed by the venom gland.

The protein resides in the secreted. Functionally, nerve growth factor is important for the development and maintenance of the sympathetic and sensory nervous systems. It stimulates division and differentiation of sympathetic and embryonic sensory neurons as well as basal forebrain cholinergic neurons in the brain. Its relevance in the snake venom is not clear. However, it has been shown to inhibit metalloproteinase-dependent proteolysis of platelet glycoprotein Ib alpha, suggesting a metalloproteinase inhibition to prevent metalloprotease autodigestion and/or protection against prey proteases. Binds a lipid between the two protein chains in the homodimer. The lipid-bound form promotes histamine relase from mouse mast cells, contrary to the lipid-free form. This is Venom nerve growth factor 1 from Naja sputatrix (Malayan spitting cobra).